A 101-amino-acid polypeptide reads, in one-letter code: Movement protein (101 aa).

The tract at residues 1–22 (MDPQNSFLLQPRVPTAAPTSGG) is disordered. Residues 30–50 (EVAILSFVGLICFYLLYLWVL) form a helical membrane-spanning segment. The disordered stretch occupies residues 79-101 (NPIPNTQAPPSQGNPGPFVPGTG). The segment covering 80 to 92 (PIPNTQAPPSQGN) has biased composition (polar residues).

It belongs to the mastrevirus movement protein family. As to quaternary structure, interacts with the capsid protein (CP). Part of a MP-CP-viral DNA complex.

It localises to the host membrane. In terms of biological role, involved in the viral transport within, and between cells. This Avena sativa (Oat) protein is Movement protein.